A 93-amino-acid polypeptide reads, in one-letter code: MPKPDIHPNWYPDAKVICNGEVVMTTGSTQPELHVDVWSGNHPFFTGTQKILDTEGRVDRFMRKYGMGSADAAADEKKPDAKNNNKDNTSKED.

The disordered stretch occupies residues 68–93 (GSADAAADEKKPDAKNNNKDNTSKED). The span at 74–93 (ADEKKPDAKNNNKDNTSKED) shows a compositional bias: basic and acidic residues.

Belongs to the bacterial ribosomal protein bL31 family. Type A subfamily. In terms of assembly, part of the 50S ribosomal subunit.

Binds the 23S rRNA. The sequence is that of Large ribosomal subunit protein bL31 from Prochlorococcus marinus (strain MIT 9313).